Consider the following 282-residue polypeptide: Phosphoglycerate mutase-like protein 1 (282 aa).

Catalysis depends on His-23, which acts as the Tele-phosphohistidine intermediate. Glu-135 (proton donor/acceptor) is an active-site residue.

It belongs to the phosphoglycerate mutase family.

In terms of biological role, may play a role in carbohydrates metabolism. This chain is Phosphoglycerate mutase-like protein 1, found in Arabidopsis thaliana (Mouse-ear cress).